A 392-amino-acid chain; its full sequence is Putative RNA-binding protein Luc7-like 2 (392 aa).

The residue at position 18 (serine 18) is a Phosphoserine. Positions 102–177 (EVSKKRLAET…EAEEVYRNSM (76 aa)) form a coiled coil. A compositionally biased stretch (basic and acidic residues) spans 235–257 (KQEKRNQERLKRREEREREEREK). The interval 235 to 392 (KQEKRNQERL…SSEEREAGEI (158 aa)) is disordered. Positions 258–321 (LRRSRSHSKN…RSRSHQRSRH (64 aa)) are enriched in basic residues. 5-hydroxylysine; by JMJD6 occurs at positions 266 and 269. Basic and acidic residues-rich tracts occupy residues 337–364 (KERFRDQDLASRDRDRSSRDRSPRDRDR) and 377–392 (RSEDRRSSEEREAGEI).

Belongs to the Luc7 family. As to quaternary structure, interacts with SCNM1. All isoforms are expressed in brain, kidney, heart, thymus, stomach, skeletal muscle, testis and spinal cord.

It is found in the nucleus speckle. Its subcellular location is the nucleus. The protein resides in the nucleoplasm. Functionally, may bind to RNA via its Arg/Ser-rich domain. The polypeptide is Putative RNA-binding protein Luc7-like 2 (Luc7l2) (Mus musculus (Mouse)).